A 208-amino-acid chain; its full sequence is Small ribosomal subunit protein uS2 (208 aa).

The protein belongs to the universal ribosomal protein uS2 family.

This Pyrobaculum calidifontis (strain DSM 21063 / JCM 11548 / VA1) protein is Small ribosomal subunit protein uS2.